The sequence spans 600 residues: Elongation factor 4 (600 aa).

In terms of domain architecture, tr-type G spans 5-187; that stretch reads KYIRNFSIIA…AIVSKLPPPK (183 aa). Residues 17–22 and 134–137 contribute to the GTP site; these read DHGKST and NKLD.

It belongs to the TRAFAC class translation factor GTPase superfamily. Classic translation factor GTPase family. LepA subfamily.

Its subcellular location is the cell inner membrane. The enzyme catalyses GTP + H2O = GDP + phosphate + H(+). In terms of biological role, required for accurate and efficient protein synthesis under certain stress conditions. May act as a fidelity factor of the translation reaction, by catalyzing a one-codon backward translocation of tRNAs on improperly translocated ribosomes. Back-translocation proceeds from a post-translocation (POST) complex to a pre-translocation (PRE) complex, thus giving elongation factor G a second chance to translocate the tRNAs correctly. Binds to ribosomes in a GTP-dependent manner. In Rickettsia rickettsii (strain Iowa), this protein is Elongation factor 4.